The chain runs to 432 residues: Glutamate-1-semialdehyde 2,1-aminomutase (432 aa).

Lys272 is subject to N6-(pyridoxal phosphate)lysine.

This sequence belongs to the class-III pyridoxal-phosphate-dependent aminotransferase family. HemL subfamily. In terms of assembly, homodimer. Requires pyridoxal 5'-phosphate as cofactor.

Its subcellular location is the cytoplasm. It carries out the reaction (S)-4-amino-5-oxopentanoate = 5-aminolevulinate. The protein operates within porphyrin-containing compound metabolism; protoporphyrin-IX biosynthesis; 5-aminolevulinate from L-glutamyl-tRNA(Glu): step 2/2. Its pathway is porphyrin-containing compound metabolism; chlorophyll biosynthesis. The sequence is that of Glutamate-1-semialdehyde 2,1-aminomutase from Nostoc sp. (strain PCC 7120 / SAG 25.82 / UTEX 2576).